The chain runs to 176 residues: Cytochrome c oxidase subunit 4 isoform 2, mitochondrial (176 aa).

The N-terminal 28 residues, Met1–Met28, are a transit peptide targeting the mitochondrion. The Mitochondrial matrix portion of the chain corresponds to Ala29–Ser106. A helical membrane pass occupies residues Glu107 to Tyr132. At Val133–Lys176 the chain is on the mitochondrial intermembrane side.

It belongs to the cytochrome c oxidase IV family. In terms of assembly, component of the cytochrome c oxidase (complex IV, CIV), a multisubunit enzyme composed of 14 subunits. The complex is composed of a catalytic core of 3 subunits MT-CO1, MT-CO2 and MT-CO3, encoded in the mitochondrial DNA, and 11 supernumerary subunits COX4I, COX5A, COX5B, COX6A, COX6B, COX6C, COX7A, COX7B, COX7C, COX8 and NDUFA4, which are encoded in the nuclear genome. The complex exists as a monomer or a dimer and forms supercomplexes (SCs) in the inner mitochondrial membrane with NADH-ubiquinone oxidoreductase (complex I, CI) and ubiquinol-cytochrome c oxidoreductase (cytochrome b-c1 complex, complex III, CIII), resulting in different assemblies (supercomplex SCI(1)III(2)IV(1) and megacomplex MCI(2)III(2)IV(2)).

It is found in the mitochondrion inner membrane. It functions in the pathway energy metabolism; oxidative phosphorylation. Its function is as follows. Component of the cytochrome c oxidase, the last enzyme in the mitochondrial electron transport chain which drives oxidative phosphorylation. The respiratory chain contains 3 multisubunit complexes succinate dehydrogenase (complex II, CII), ubiquinol-cytochrome c oxidoreductase (cytochrome b-c1 complex, complex III, CIII) and cytochrome c oxidase (complex IV, CIV), that cooperate to transfer electrons derived from NADH and succinate to molecular oxygen, creating an electrochemical gradient over the inner membrane that drives transmembrane transport and the ATP synthase. Cytochrome c oxidase is the component of the respiratory chain that catalyzes the reduction of oxygen to water. Electrons originating from reduced cytochrome c in the intermembrane space (IMS) are transferred via the dinuclear copper A center (CU(A)) of subunit 2 and heme A of subunit 1 to the active site in subunit 1, a binuclear center (BNC) formed by heme A3 and copper B (CU(B)). The BNC reduces molecular oxygen to 2 water molecules using 4 electrons from cytochrome c in the IMS and 4 protons from the mitochondrial matrix. The polypeptide is Cytochrome c oxidase subunit 4 isoform 2, mitochondrial (Thunnus obesus (Bigeye tuna)).